The primary structure comprises 543 residues: EH domain-containing protein 2 (543 aa).

A phosphoserine mark is found at Ser-3 and Ser-44. The region spanning 55 to 286 is the Dynamin-type G domain; the sequence is FDGKPMVLVA…DLFRDIQGLP (232 aa). Residues 65–72 form a G1 motif region; sequence GQYSTGKT. 65-72 lines the ATP pocket; the sequence is GQYSTGKT. Residues 91–92 are G2 motif; sequence EP. The G3 motif stretch occupies residues 153–156; the sequence is DTPG. Residues 219 to 222 are G4 motif; that stretch reads NKAD. Lys-220 serves as a coordination point for ATP. Position 243 (Val-243) is a region of interest, G5 motif. Residue Trp-258 participates in ATP binding. Residues 320-340 are mediates membrane-binding; the sequence is SVFGKENKKKQLIFKLPVIFA. Residues Ser-438, Ser-468, Ser-470, Ser-484, and Ser-493 each carry the phosphoserine modification. Residues 449-537 enclose the EH domain; the sequence is DKSKYDEIFY…RRLVPPSKRR (89 aa). An EF-hand domain is found at 481–516; that stretch reads LPNSVLGRIWKLSDVDRDGMLDDEEFALASHLIEAK. Asp-494, Asp-496, Asp-498, Met-500, and Glu-505 together coordinate Ca(2+). The interval 521 to 543 is disordered; the sequence is GLPTNLPRRLVPPSKRRQKGSAE. Positions 534-543 are enriched in basic residues; that stretch reads SKRRQKGSAE.

The protein belongs to the TRAFAC class dynamin-like GTPase superfamily. Dynamin/Fzo/YdjA family. EHD subfamily. In terms of assembly, homodimer and homooligomer. Interacts with EHD1. May also interact with EHD3 and EHD4. Interacts with MYOF. Interacts with EHBP1. Interacts with FER1L5 (via second C2 domain). Interacts with CAV1 in a cholesterol-dependent manner. Interacts (via EH domain) with PACSIN2 (via NPF motifs); this interaction probably stabilizes the caveolae.

It is found in the cell membrane. Its subcellular location is the membrane. The protein resides in the caveola. It localises to the endosome membrane. The protein localises to the cytoplasm. It is found in the cytosol. The very low intrinsic ATPase activity is increased upon interaction with liposomes. Its function is as follows. ATP- and membrane-binding protein that controls membrane reorganization/tubulation upon ATP hydrolysis. Plays a role in membrane trafficking between the plasma membrane and endosomes. Important for the internalization of GLUT4. Required for fusion of myoblasts to skeletal muscle myotubes. Required for normal translocation of FER1L5 to the plasma membrane. Regulates the equilibrium between cell surface-associated and cell surface-dissociated caveolae by constraining caveolae at the cell membrane. The chain is EH domain-containing protein 2 from Rattus norvegicus (Rat).